The chain runs to 485 residues: Cytochrome P450 monooxygenase tndB (485 aa).

Residues 20–40 (VYGISAVIAVGLAIYSASLAI) form a helical membrane-spanning segment. Position 481 (Cys481) interacts with heme.

The protein belongs to the cytochrome P450 family. Requires heme as cofactor.

It is found in the membrane. The protein operates within secondary metabolite biosynthesis; terpenoid biosynthesis. Functionally, cytochrome P450 monooxygenase; part of the gene cluster that mediates the biosynthesis of talaronoid C, a fusicoccane diterpenoid with an unprecedented tricyclic 5/8/6 ring system. The first step in the pathway is performed by the fusicoccadiene synthase tndC that possesses both prenyl transferase and terpene cyclase activity, converting isopentenyl diphosphate and dimethylallyl diphosphate into geranylgeranyl diphosphate (GGDP) and further converting GGDP into talarodiene, a precursor for talaronoid C. The remaining enzymes from the cluster include the cytochrome P450 monooxygenase tndB, the aldehyde reductase tndE and the alcohol dehydrogenase tndF that are involved in the conversion of talarodiene into talaronoid C. The sequence is that of Cytochrome P450 monooxygenase tndB from Aspergillus flavipes.